A 772-amino-acid polypeptide reads, in one-letter code: MTAKSAAAAARATVYGYPRQGPNRELKKAIEGYWKGRVSAPELRSLAADLRAANWRRLADAGIDEVPAGDFSYYDHVLDTTVMVGAIPERHRAAVAADALDGYFAMARGTQEVAPLEMTKWFDTNYHYLVPELGPDTVFTADSTKQVTELAEAVALGLTARPVLVGPVTYLLLAKPAPGAPADFEPLTLLDRLLPVYAEVLTDLRAAGAEWVQLDEPAFVQDRTPAELNALERAYRELGALTDRPKLLVASYFDRLGDALPVLAKAPIEGLALDFTDAAATNLDALAAVGGLPGKRLVAGVVNGRNIWINDLQKSLSTLGTLLGLADRVDVSASCSLLHVPLDTGAERDIEPQILRWLAFARQKTAEIVTLAKGLAQGTDAITGELAASRADMASRAGSPITRNPAVRARAEAVTDDDARRSQPYAERTAAQRAHLGLPPLPTTTIGSFPQTGEIRAARADLRDGRIDIAGYEERIRAEIQEVISFQEKTGLDVLVHGEPERNDMVQYFAEQLTGYLATQHGWVQSYGTRYVRPPILAGDISRPEPMTVRWTTYAQSLTEKPVKGMLTGPVTMLAWSFVRDDQPLGDTARQVALALRDEVNDLEAAGTSVIQVDEPALRETLPLRAADHTAYLAWATEAFRLTTSGVRPDTQIHTHMCYAEFGDIVQAIDDLDADVISLEAARSHMQVAHELATHGYPREAGPGVYDIHSPRVPSAEEAAALLRTGLKAIPAERLWVNPDCGLKTRGWPETRASLENLVATARTLRGELSAS.

5-methyltetrahydropteroyltri-L-glutamate is bound by residues 24 to 27 (RELK) and Lys120. L-homocysteine contacts are provided by residues 446-448 (IGS) and Glu499. Residues 446–448 (IGS) and Glu499 each bind L-methionine. 5-methyltetrahydropteroyltri-L-glutamate is bound at residue Trp576. Asp614 is an L-homocysteine binding site. Asp614 contributes to the L-methionine binding site. Glu620 contacts 5-methyltetrahydropteroyltri-L-glutamate. Residues His656, Cys658, and Glu680 each contribute to the Zn(2+) site. Catalysis depends on His709, which acts as the Proton donor. Residue Cys741 participates in Zn(2+) binding.

This sequence belongs to the vitamin-B12 independent methionine synthase family. Zn(2+) is required as a cofactor.

It carries out the reaction 5-methyltetrahydropteroyltri-L-glutamate + L-homocysteine = tetrahydropteroyltri-L-glutamate + L-methionine. It functions in the pathway amino-acid biosynthesis; L-methionine biosynthesis via de novo pathway; L-methionine from L-homocysteine (MetE route): step 1/1. In terms of biological role, catalyzes the transfer of a methyl group from 5-methyltetrahydrofolate to homocysteine resulting in methionine formation. The chain is 5-methyltetrahydropteroyltriglutamate--homocysteine methyltransferase from Streptomyces coelicolor (strain ATCC BAA-471 / A3(2) / M145).